Consider the following 603-residue polypeptide: Adenine deaminase (603 aa).

Belongs to the metallo-dependent hydrolases superfamily. Adenine deaminase family. In terms of assembly, homodimer. It depends on Mn(2+) as a cofactor.

The enzyme catalyses adenine + H2O + H(+) = hypoxanthine + NH4(+). The sequence is that of Adenine deaminase from Klebsiella pneumoniae subsp. pneumoniae (strain ATCC 700721 / MGH 78578).